The following is a 331-amino-acid chain: Elongation factor Ts, mitochondrial (331 aa).

Residues 1 to 14 (MIVSRQVIRSVVRK) constitute a mitochondrion transit peptide.

Belongs to the EF-Ts family.

The protein resides in the mitochondrion. Its function is as follows. Associates with the EF-Tu.GDP complex and induces the exchange of GDP to GTP. It remains bound to the aminoacyl-tRNA.EF-Tu.GTP complex up to the GTP hydrolysis stage on the ribosome. The polypeptide is Elongation factor Ts, mitochondrial (Brugia malayi (Filarial nematode worm)).